The following is a 401-amino-acid chain: tRNA(Met) cytidine acetate ligase (401 aa).

ATP-binding positions include 7–20, G102, N164, and R189; that span reads IVEY…HLYH.

Belongs to the TmcAL family.

Its subcellular location is the cytoplasm. It carries out the reaction cytidine(34) in elongator tRNA(Met) + acetate + ATP = N(4)-acetylcytidine(34) in elongator tRNA(Met) + AMP + diphosphate. Its function is as follows. Catalyzes the formation of N(4)-acetylcytidine (ac(4)C) at the wobble position of elongator tRNA(Met), using acetate and ATP as substrates. First activates an acetate ion to form acetyladenylate (Ac-AMP) and then transfers the acetyl group to tRNA to form ac(4)C34. In Caldanaerobacter subterraneus subsp. tengcongensis (strain DSM 15242 / JCM 11007 / NBRC 100824 / MB4) (Thermoanaerobacter tengcongensis), this protein is tRNA(Met) cytidine acetate ligase.